The sequence spans 113 residues: Iron-sulfur cluster insertion protein ErpA (113 aa).

Cysteine 41, cysteine 105, and cysteine 107 together coordinate iron-sulfur cluster.

It belongs to the HesB/IscA family. In terms of assembly, homodimer. It depends on iron-sulfur cluster as a cofactor.

In terms of biological role, required for insertion of 4Fe-4S clusters for at least IspG. In Actinobacillus pleuropneumoniae serotype 7 (strain AP76), this protein is Iron-sulfur cluster insertion protein ErpA.